The chain runs to 749 residues: Protein lin-54 homolog (749 aa).

Residue lysine 139 forms a Glycyl lysine isopeptide (Lys-Gly) (interchain with G-Cter in SUMO2) linkage. N6-acetyllysine occurs at positions 244 and 249. Phosphoserine is present on residues serine 264, serine 282, serine 310, and serine 314. A Glycyl lysine isopeptide (Lys-Gly) (interchain with G-Cter in SUMO2) cross-link involves residue lysine 357. The region spanning 521–634 is the CRC domain; that stretch reads PRKPCNCTKS…KCIGCKNFEE (114 aa). The segment at 523–536 is DNA-binding; it reads KPCNCTKSLCLKLY. Residues cysteine 525, cysteine 527, cysteine 532, cysteine 537, cysteine 539, cysteine 546, cysteine 549, cysteine 551, and cysteine 554 each contribute to the Zn(2+) site. A linker region spans residues 583–596; that stretch reads IGKGKEGESDRRHS. Zn(2+) is bound by residues cysteine 599, cysteine 601, cysteine 606, cysteine 611, cysteine 613, cysteine 620, cysteine 624, cysteine 626, and cysteine 629. The interval 599–612 is DNA-binding; the sequence is CNCKRSGCLKNYCE. A Phosphoserine modification is found at serine 635. Residues lysine 639, lysine 659, and lysine 661 each participate in a glycyl lysine isopeptide (Lys-Gly) (interchain with G-Cter in SUMO2) cross-link.

Belongs to the lin-54 family. In terms of assembly, component of the DREAM complex (also named LINC complex) at least composed of E2F4, E2F5, LIN9, LIN37, LIN52, LIN54, MYBL1, MYBL2, RBL1, RBL2, RBBP4, RBL2, TFDP1 and TFDP2. The complex exists in quiescent cells where it represses cell cycle-dependent genes. It dissociates in S phase when LIN9, LIN37, LIN52 and LIN54 form a subcomplex that binds to MYBL2.

The protein resides in the nucleus. Its function is as follows. Component of the DREAM complex, a multiprotein complex that can both act as a transcription activator or repressor depending on the context. In G0 phase, the complex binds to more than 800 promoters and is required for repression of E2F target genes. In S phase, the complex selectively binds to the promoters of G2/M genes whose products are required for mitosis and participates in their cell cycle dependent activation. In the complex, acts as a DNA-binding protein that binds the promoter of CDK1 in a sequence-specific manner. Specifically recognizes the consensus motif 5'-TTYRAA-3' in target DNA. The sequence is that of Protein lin-54 homolog (Lin54) from Rattus norvegicus (Rat).